The following is a 417-amino-acid chain: Tyrosine--tRNA ligase (417 aa).

L-tyrosine is bound at residue Tyr39. The 'HIGH' region signature appears at 44-53 (PTAPSLHAGG). Residues Tyr176 and Gln180 each coordinate L-tyrosine. The short motif at 236–240 (KMGKS) is the 'KMSKS' region element. Lys239 lines the ATP pocket. Residues 350–417 (IGVLALMVLA…KKRHVLIRPA (68 aa)) form the S4 RNA-binding domain.

This sequence belongs to the class-I aminoacyl-tRNA synthetase family. TyrS type 1 subfamily. In terms of assembly, homodimer.

It localises to the cytoplasm. It catalyses the reaction tRNA(Tyr) + L-tyrosine + ATP = L-tyrosyl-tRNA(Tyr) + AMP + diphosphate + H(+). Its function is as follows. Catalyzes the attachment of tyrosine to tRNA(Tyr) in a two-step reaction: tyrosine is first activated by ATP to form Tyr-AMP and then transferred to the acceptor end of tRNA(Tyr). This Brucella abortus (strain 2308) protein is Tyrosine--tRNA ligase.